Reading from the N-terminus, the 333-residue chain is SPbeta prophage-derived recombinase-like protein YomM (333 aa).

Residues 30-113 (EEHRNLVQEF…GVSSLNNYIE (84 aa)) form the Core-binding (CB) domain. Residues 142-332 (YEKVKVTYDD…DFEEEKNQIF (191 aa)) form the Tyr recombinase domain. Catalysis depends on residues Arg180, Lys211, His281, and His308. The O-(3'-phospho-DNA)-tyrosine intermediate role is filled by Tyr319.

This sequence belongs to the 'phage' integrase family.

This Bacillus subtilis (strain 168) protein is SPbeta prophage-derived recombinase-like protein YomM (yomM).